Here is a 1634-residue protein sequence, read N- to C-terminus: Leucine-rich repeat-containing protein 37A3 (1634 aa).

The N-terminal stretch at Met-1–Lys-35 is a signal peptide. Over Glu-36–Lys-1581 the chain is Extracellular. Disordered regions lie at residues Pro-53 to Glu-104, Ser-129 to Pro-154, Thr-172 to Ala-531, Pro-619 to Glu-642, and Glu-758 to Pro-777. The stretch at Leu-137–Leu-160 is one LRR 1 repeat. Polar residues-rich tracts occupy residues Thr-172–Thr-189 and Glu-223–Ser-237. 2 LRR repeats span residues Leu-230–Glu-253 and Glu-267–Ala-290. Residues Leu-238 to Leu-249 are compositionally biased toward low complexity. N-linked (GlcNAc...) asparagine glycosylation occurs at Asn-296. Positions Thr-307–Pro-326 are enriched in polar residues. Positions Ser-358 to Glu-368 are enriched in low complexity. Residues Leu-433–Gly-446 are compositionally biased toward polar residues. Positions Ser-482–Pro-493 are enriched in low complexity. A compositionally biased stretch (polar residues) spans Thr-760–Glu-770. 6 LRR repeats span residues Asn-864–Ala-887, Tyr-888–Gly-911, Leu-912–Pro-935, Pro-937–Ala-959, Met-963–Leu-987, and Leu-1002–Cys-1027. Asn-1079 is a glycosylation site (N-linked (GlcNAc...) asparagine). LRR repeat units follow at residues Leu-1124–Thr-1146 and Leu-1151–Lys-1176. Basic and acidic residues-rich tracts occupy residues Glu-1181–Gln-1191 and Ala-1201–Gln-1216. Disordered stretches follow at residues Glu-1181–Ala-1227 and Arg-1306–Lys-1329. An LRR 12 repeat occupies Phe-1359–Glu-1384. A helical transmembrane segment spans residues Leu-1582–Ile-1602. Topologically, residues Glu-1603–Pro-1634 are cytoplasmic. Positions Asp-1614–Pro-1634 are disordered. Residues Ala-1624 to Pro-1634 are compositionally biased toward acidic residues.

This sequence belongs to the LRRC37A family.

Its subcellular location is the membrane. The sequence is that of Leucine-rich repeat-containing protein 37A3 (LRRC37A3) from Homo sapiens (Human).